Here is a 167-residue protein sequence, read N- to C-terminus: ATP synthase subunit b (167 aa).

A helical membrane pass occupies residues 7–25 (SFWLTISFVIFVYLIYRPA).

This sequence belongs to the ATPase B chain family. In terms of assembly, F-type ATPases have 2 components, F(1) - the catalytic core - and F(0) - the membrane proton channel. F(1) has five subunits: alpha(3), beta(3), gamma(1), delta(1), epsilon(1). F(0) has three main subunits: a(1), b(2) and c(10-14). The alpha and beta chains form an alternating ring which encloses part of the gamma chain. F(1) is attached to F(0) by a central stalk formed by the gamma and epsilon chains, while a peripheral stalk is formed by the delta and b chains.

It localises to the cell inner membrane. Its function is as follows. F(1)F(0) ATP synthase produces ATP from ADP in the presence of a proton or sodium gradient. F-type ATPases consist of two structural domains, F(1) containing the extramembraneous catalytic core and F(0) containing the membrane proton channel, linked together by a central stalk and a peripheral stalk. During catalysis, ATP synthesis in the catalytic domain of F(1) is coupled via a rotary mechanism of the central stalk subunits to proton translocation. Component of the F(0) channel, it forms part of the peripheral stalk, linking F(1) to F(0). The chain is ATP synthase subunit b from Rickettsia prowazekii (strain Madrid E).